Here is a 908-residue protein sequence, read N- to C-terminus: Adhesion G-protein coupled receptor F1 (908 aa).

An N-terminal signal peptide occupies residues 1–20; the sequence is MRIGLLWLVPLFTLTEGTDG. Over 21-588 the chain is Extracellular; that stretch reads FLQQKNDGRR…VVPVVKWITY (568 aa). Residues Asn-133, Asn-167, Asn-328, Asn-353, Asn-367, Asn-388, Asn-422, Asn-453, Asn-510, Asn-519, Asn-526, and Asn-551 are each glycosylated (N-linked (GlcNAc...) asparagine). The region spanning 147–255 is the SEA domain; the sequence is ERAKVWGTFE…GSFRVFGKAP (109 aa). The GAIN-B domain maps to 434 to 577; it reads PVTQIQSTRG…SMLMSPFVPS (144 aa). 2 disulfide bridges follow: Cys-532-Cys-559 and Cys-547-Cys-561. The tract at residues 532-577 is GPS; it reads CVFWDFSQLQWSNAGCQLVNETLDTVLCRCSHLTSFSMLMSPFVPS. A stachel region spans residues 566–574; sequence SFSMLMSPF. The helical transmembrane segment at 589 to 609 threads the bilayer; the sequence is IGLSISIASLILCLIIESLFW. The Cytoplasmic segment spans residues 610 to 622; it reads KQTKRSQTSYTRN. The helical transmembrane segment at 623 to 643 threads the bilayer; the sequence is ICLVNIAVSLLIADVWFIIAA. The Extracellular segment spans residues 644–658; that stretch reads TVDPSVSPSGVCVAA. An intrachain disulfide couples Cys-655 to Cys-731. The chain crosses the membrane as a helical span at residues 659-679; the sequence is VFFTHFFYLAVFFWMLVLGIL. Residues 680–697 lie on the Cytoplasmic side of the membrane; it reads LAYRIILVFHHMALTTMM. Residues 698-718 traverse the membrane as a helical segment; that stretch reads AIGFCLGYGCPLLISIITLAV. Residues 719 to 742 are Extracellular-facing; the sequence is TQPSNSYKRNDVCWLNWSDKSKPL. Residue Asn-734 is glycosylated (N-linked (GlcNAc...) asparagine). Residues 743 to 763 form a helical membrane-spanning segment; the sequence is LAFVVPALTIVAVNLVVVLLV. At 764–789 the chain is on the cytoplasmic side; the sequence is LRKLWRPAVGERLNQDDKATAIRMGK. Residues 790–810 form a helical membrane-spanning segment; that stretch reads SLLVLTPLLGLTWGFGIGTMA. Residues 811–818 lie on the Extracellular side of the membrane; that stretch reads NSHNLAWH. A helical transmembrane segment spans residues 819-839; the sequence is VLFALLNAFQGFFIFCFGILL. Residues 840–908 are Cytoplasmic-facing; the sequence is DTKLRQLLSN…ITLTQFLSTE (69 aa).

Belongs to the G-protein coupled receptor 2 family. Adhesion G-protein coupled receptor (ADGR) subfamily. As to quaternary structure, heterodimer of 2 chains generated by proteolytic processing; the large extracellular N-terminal fragment and the membrane-bound C-terminal fragment predominantly remain associated and non-covalently linked. Post-translationally, autoproteolytically processed at the GPS region of the GAIN-B domain; this cleavage modulates receptor activity. Expressed in liver, kidney and adrenal gland. In kidney strong expression in the renal pelvis and the ureter.

The protein resides in the cell membrane. Its activity is regulated as follows. Forms a heterodimer of 2 chains generated by proteolytic processing that remain associated through non-covalent interactions mediated by the GAIN-B domain. In the inactivated receptor, the Stachel sequence (also named stalk) is embedded in the GAIN-B domain, where it adopts a beta-strand conformation. On activation, the Stachel moves into the 7 transmembrane region and adopts a twisted hook-shaped configuration that forms contacts within the receptor, leading to coupling of a G-alpha protein, which activates signaling. The cleaved GAIN-B and N-terminal domains can then dissociate from the rest of the receptor. In terms of biological role, adhesion G-protein coupled receptor (aGPCR) for N-docosahexaenoylethanolamine (synaptamide), an omega-3 fatty acid lipid highly enriched in the brain. Ligand binding causes a conformation change that triggers signaling via guanine nucleotide-binding proteins (G proteins) and modulates the activity of downstream effectors, such as adenylate cyclase. ADGRF1 is coupled to G(s) G proteins and mediates activation of adenylate cyclase activity. Also able to couple to G(q), G(i) and G(12)/G(13) G proteins; additional evidence is however required to confirm this result in vivo. Involved in the development of neurons and cognitive function. In liver, involved in fat accumulation. The sequence is that of Adhesion G-protein coupled receptor F1 from Mus musculus (Mouse).